Consider the following 399-residue polypeptide: MSDLSYLDTLGNKELLAKCLEHGLPGVPVTDSTRSVIIRRLKAKITGVPLNKSKSASKKAIPRRETVHGSQVTTPTSEPVRRTPGKSAGRTSSNNNKISEQSRRTIAYGLDNTSISGRSVQTTTTVSDMSSQSEDDDSYMVDSPVPNYSKDQQPRRYVSLAKSGVLTTSYTREVDQPLYEQEDIPRSYTYERPHVPAATLHALPTYEPRIEPSTYRPTDLGFSRPLLTQTNLNSTSYEESSTYNPKLSPISPRNTFSGSARPFGGPAPAPAPIRQRQSVPVSGSNLARGRLLQPTTAVNTLYPQLNEFYDQPNDAGEPMETESESEVEEVPINSHFQKNRFSPLARKPLVRHHDQVSPMAQFRALAVSLDQKYNLKFYLILVVSVMLATMVYVVLTPNA.

The LEM domain maps to 4–48 (LSYLDTLGNKELLAKCLEHGLPGVPVTDSTRSVIIRRLKAKITGV). 3 disordered regions span residues 49–103 (PLNK…EQSR), 119–141 (SVQT…SYMV), and 233–287 (NSTS…SNLA). Polar residues-rich tracts occupy residues 68–77 (HGSQVTTPTS) and 89–99 (GRTSSNNNKIS). The segment covering 233–256 (NSTSYEESSTYNPKLSPISPRNTF) has biased composition (polar residues). A helical membrane pass occupies residues 377 to 397 (FYLILVVSVMLATMVYVVLTP).

The protein localises to the nucleus inner membrane. It is found in the cytoplasm. The protein resides in the nucleus. Its subcellular location is the nucleoplasm. It localises to the endoplasmic reticulum. Functionally, inner nuclear membrane protein. May have a role in maintaining the structural integrity of the nuclear lamina. During pupal development, plays essential and redundant functions with the other LEM domain proteins; MAN1 and Ote. Also has a redundant but important role with Ote in larval development. In Drosophila melanogaster (Fruit fly), this protein is LEM domain-containing protein Bocksbeutel.